Reading from the N-terminus, the 374-residue chain is tRNA-specific 2-thiouridylase MnmA (374 aa).

ATP is bound by residues 15–22 (GMSGGVDS) and Met41. An interaction with target base in tRNA region spans residues 101-103 (NPD). Cys106 (nucleophile) is an active-site residue. Cysteines 106 and 206 form a disulfide. Gly130 contacts ATP. Residues 156-158 (KDQ) form an interaction with tRNA region. Residue Cys206 is the Cysteine persulfide intermediate of the active site. The segment at 324–325 (RY) is interaction with tRNA.

This sequence belongs to the MnmA/TRMU family.

The protein localises to the cytoplasm. It carries out the reaction S-sulfanyl-L-cysteinyl-[protein] + uridine(34) in tRNA + AH2 + ATP = 2-thiouridine(34) in tRNA + L-cysteinyl-[protein] + A + AMP + diphosphate + H(+). In terms of biological role, catalyzes the 2-thiolation of uridine at the wobble position (U34) of tRNA, leading to the formation of s(2)U34. This chain is tRNA-specific 2-thiouridylase MnmA, found in Aromatoleum aromaticum (strain DSM 19018 / LMG 30748 / EbN1) (Azoarcus sp. (strain EbN1)).